The sequence spans 137 residues: 1,4-dihydroxy-2-naphthoyl-CoA hydrolase (137 aa).

The active site involves Asp12.

It belongs to the 4-hydroxybenzoyl-CoA thioesterase family. DHNA-CoA hydrolase subfamily.

The catalysed reaction is 1,4-dihydroxy-2-naphthoyl-CoA + H2O = 1,4-dihydroxy-2-naphthoate + CoA + H(+). Its pathway is cofactor biosynthesis; phylloquinone biosynthesis. It functions in the pathway quinol/quinone metabolism; 1,4-dihydroxy-2-naphthoate biosynthesis; 1,4-dihydroxy-2-naphthoate from chorismate: step 7/7. In terms of biological role, catalyzes the hydrolysis of 1,4-dihydroxy-2-naphthoyl-CoA (DHNA-CoA) to 1,4-dihydroxy-2-naphthoate (DHNA), a reaction involved in phylloquinone (vitamin K1) biosynthesis. This Acaryochloris marina (strain MBIC 11017) protein is 1,4-dihydroxy-2-naphthoyl-CoA hydrolase.